A 263-amino-acid chain; its full sequence is Palmitoyltransferase ZDHHC21 (263 aa).

The Cytoplasmic portion of the chain corresponds to 1 to 4 (MKMR). A helical membrane pass occupies residues 5–25 (LHFVVDPMGWFCMSMVFFVWI). Topologically, residues 26–44 (YNSFLIPKLVLLPHYAEGH) are extracellular. Residues 45 to 65 (ITAEPVICYYLASLLCFSALF) form a helical membrane-spanning segment. Residues 66 to 131 (RASTTDPGKL…WINNCVGEDN (66 aa)) are Cytoplasmic-facing. Residues 90–140 (ELCNKCNMMRPKRSHHCSRCGHCVRRMDHHCPWINNCVGEDNHWLFLQLCF) enclose the DHHC domain. Residue Cys-120 is the S-palmitoyl cysteine intermediate of the active site. A helical membrane pass occupies residues 132–152 (HWLFLQLCFYTQVLSFYTLVL). Topologically, residues 153–181 (DFCQYYYFLPLSSVDQADFAVHHELALLR) are extracellular. Residues 182–202 (VSCFMGLIMFGGISSLFYTQV) form a helical membrane-spanning segment. Residues 203 to 263 (KGILTDTTTI…KLNLTIRSHV (61 aa)) are Cytoplasmic-facing.

It belongs to the DHHC palmitoyltransferase family.

It is found in the golgi apparatus membrane. It localises to the golgi apparatus. The protein resides in the cis-Golgi network membrane. Its subcellular location is the cell membrane. It carries out the reaction L-cysteinyl-[protein] + hexadecanoyl-CoA = S-hexadecanoyl-L-cysteinyl-[protein] + CoA. Its function is as follows. Palmitoyltransferase that catalyzes the addition of palmitate onto various protein substrates. The sequence is that of Palmitoyltransferase ZDHHC21 from Danio rerio (Zebrafish).